We begin with the raw amino-acid sequence, 191 residues long: Fe/S biogenesis protein NfuA (191 aa).

Cys-149 and Cys-152 together coordinate [4Fe-4S] cluster.

This sequence belongs to the NfuA family. As to quaternary structure, homodimer. [4Fe-4S] cluster is required as a cofactor.

Functionally, involved in iron-sulfur cluster biogenesis. Binds a 4Fe-4S cluster, can transfer this cluster to apoproteins, and thereby intervenes in the maturation of Fe/S proteins. Could also act as a scaffold/chaperone for damaged Fe/S proteins. This is Fe/S biogenesis protein NfuA from Pectobacterium carotovorum subsp. carotovorum (strain PC1).